The sequence spans 693 residues: MGIARSINSFMFFFFLMILSNASKSSVLAEATTAKFTFIGFKENQTDIQTEGASTIQHDNDLLRLTNRKQNVTGTAFYRKPIRLRELTNSSDIKVCSFSTSFVFVILPSSPGNGGFGFTFTLSPTPNRPGAESAQYLGLLNRTNNGNPSNHVFAVEFDTVQGFKDGADRRGNHIGLNFNNLSSNVQEPLIYYDTEDRKEDFQLESGEPIRVLIDYDGSSETLNVTIYPTRLEFKPKKPLISRRVSELSEIVKDEMYVGFTAATGKDQSSAHYVMGWSFSSCGENPMADWLEISRLPPPPRLSNKKGYNSQVIVLIVALSIVTLVLLVLLFIFVMYKRRIQEEDTLEDWEIDYPHRFRYRDLYLATKKFKESEIIGTGGFGIVYRGNLSSSGPIAVKKITSNSLQGVREFMAEIESLGRLGHKNLVNLQGWCKHKNELLLIYDYIPNGSLDSLLYQTPRRNGIVLPWDVRFEIIKGIASGLLYLHEEWEQIVVHRDVKPSNVLIDEDMNAKLGDFGLARLYERGTLTQTTKIVGTLGYMAPELTRNGKGSTASDVFAFGVLLLEIVCGNKPTNAENFFLADWVMEFHTNGGILCVVDQNLGSSFNGREAKLALVVGLLCCHQKPKFRPSMRMVLRYLNGEENVPQIDENWGFSDSSRDDHKSNVVGYVSSDRASSSNTFSSFSNVSSSSIVSGR.

The signal sequence occupies residues 1–22 (MGIARSINSFMFFFFLMILSNA). N-linked (GlcNAc...) asparagine glycans are attached at residues N21, N44, N71, N89, N141, N180, and N223. At 23–311 (SKSSVLAEAT…SNKKGYNSQV (289 aa)) the chain is on the extracellular side. The segment at 33–279 (TAKFTFIGFK…AHYVMGWSFS (247 aa)) is legume-lectin like. Residues 312–332 (IVLIVALSIVTLVLLVLLFIF) traverse the membrane as a helical segment. Topologically, residues 333 to 693 (VMYKRRIQEE…VSSSSIVSGR (361 aa)) are cytoplasmic. The Protein kinase domain maps to 368 to 642 (FKESEIIGTG…LRYLNGEENV (275 aa)). Residues 374-382 (IGTGGFGIV) and K396 contribute to the ATP site. Catalysis depends on D495, which acts as the Proton acceptor. The tract at residues 670 to 693 (DRASSSNTFSSFSNVSSSSIVSGR) is disordered.

The protein in the C-terminal section; belongs to the protein kinase superfamily. Ser/Thr protein kinase family. It in the N-terminal section; belongs to the leguminous lectin family.

Its subcellular location is the cell membrane. The catalysed reaction is L-seryl-[protein] + ATP = O-phospho-L-seryl-[protein] + ADP + H(+). It catalyses the reaction L-threonyl-[protein] + ATP = O-phospho-L-threonyl-[protein] + ADP + H(+). This is Probable L-type lectin-domain containing receptor kinase VI.1 (LECRK61) from Arabidopsis thaliana (Mouse-ear cress).